The primary structure comprises 371 residues: tRNA-specific 2-thiouridylase MnmA (371 aa).

ATP contacts are provided by residues 22–29 and methionine 48; that span reads GLSGGVDS. Residues 108–110 are interaction with target base in tRNA; it reads NPD. Cysteine 113 serves as the catalytic Nucleophile. Cysteine 113 and cysteine 209 form a disulfide bridge. Glycine 137 contacts ATP. Positions 159–161 are interaction with tRNA; the sequence is KDQ. The Cysteine persulfide intermediate role is filled by cysteine 209.

It belongs to the MnmA/TRMU family.

It localises to the cytoplasm. The enzyme catalyses S-sulfanyl-L-cysteinyl-[protein] + uridine(34) in tRNA + AH2 + ATP = 2-thiouridine(34) in tRNA + L-cysteinyl-[protein] + A + AMP + diphosphate + H(+). Catalyzes the 2-thiolation of uridine at the wobble position (U34) of tRNA, leading to the formation of s(2)U34. The sequence is that of tRNA-specific 2-thiouridylase MnmA from Coxiella burnetii (strain CbuG_Q212) (Coxiella burnetii (strain Q212)).